Reading from the N-terminus, the 491-residue chain is Protein nucleotidyltransferase YdiU (491 aa).

ATP-binding residues include Gly94, Gly96, Arg97, Lys117, Asp129, Gly130, Arg180, and Arg187. Residue Asp256 is the Proton acceptor of the active site. Mg(2+)-binding residues include Asn257 and Asp266. Asp266 lines the ATP pocket.

Belongs to the SELO family. Mg(2+) serves as cofactor. Mn(2+) is required as a cofactor.

The enzyme catalyses L-seryl-[protein] + ATP = 3-O-(5'-adenylyl)-L-seryl-[protein] + diphosphate. It catalyses the reaction L-threonyl-[protein] + ATP = 3-O-(5'-adenylyl)-L-threonyl-[protein] + diphosphate. The catalysed reaction is L-tyrosyl-[protein] + ATP = O-(5'-adenylyl)-L-tyrosyl-[protein] + diphosphate. It carries out the reaction L-histidyl-[protein] + UTP = N(tele)-(5'-uridylyl)-L-histidyl-[protein] + diphosphate. The enzyme catalyses L-seryl-[protein] + UTP = O-(5'-uridylyl)-L-seryl-[protein] + diphosphate. It catalyses the reaction L-tyrosyl-[protein] + UTP = O-(5'-uridylyl)-L-tyrosyl-[protein] + diphosphate. In terms of biological role, nucleotidyltransferase involved in the post-translational modification of proteins. It can catalyze the addition of adenosine monophosphate (AMP) or uridine monophosphate (UMP) to a protein, resulting in modifications known as AMPylation and UMPylation. This chain is Protein nucleotidyltransferase YdiU, found in Alkaliphilus metalliredigens (strain QYMF).